Here is a 248-residue protein sequence, read N- to C-terminus: Probable phosphatase Sfri_3709 (248 aa).

The Zn(2+) site is built by His8, His10, His16, His41, Glu74, His102, His132, Asp193, and His195.

This sequence belongs to the PHP family. It depends on Zn(2+) as a cofactor.

The polypeptide is Probable phosphatase Sfri_3709 (Shewanella frigidimarina (strain NCIMB 400)).